The following is a 136-amino-acid chain: Large ribosomal subunit protein eL27B (136 aa).

Belongs to the eukaryotic ribosomal protein eL27 family. Component of the large ribosomal subunit (LSU). Mature yeast ribosomes consist of a small (40S) and a large (60S) subunit. The 40S small subunit contains 1 molecule of ribosomal RNA (18S rRNA) and 33 different proteins (encoded by 57 genes). The large 60S subunit contains 3 rRNA molecules (25S, 5.8S and 5S rRNA) and 46 different proteins (encoded by 81 genes).

The protein resides in the cytoplasm. Component of the ribosome, a large ribonucleoprotein complex responsible for the synthesis of proteins in the cell. The small ribosomal subunit (SSU) binds messenger RNAs (mRNAs) and translates the encoded message by selecting cognate aminoacyl-transfer RNA (tRNA) molecules. The large subunit (LSU) contains the ribosomal catalytic site termed the peptidyl transferase center (PTC), which catalyzes the formation of peptide bonds, thereby polymerizing the amino acids delivered by tRNAs into a polypeptide chain. The nascent polypeptides leave the ribosome through a tunnel in the LSU and interact with protein factors that function in enzymatic processing, targeting, and the membrane insertion of nascent chains at the exit of the ribosomal tunnel. This chain is Large ribosomal subunit protein eL27B, found in Saccharomyces cerevisiae (strain ATCC 204508 / S288c) (Baker's yeast).